We begin with the raw amino-acid sequence, 129 residues long: MCIFCKIINGEIPAKVVYEDEHVLAFLDINPRNKGHTLVVPKKHYERFDEMPDDELCNFIKGVKKTVEVLKKLGFDGYNIVNNNGRVAGQEVNHVHFHIIPRYEGDGEVVKFGEVKNVDLDEVLKEIKG.

An HIT domain is found at 3-109 (IFCKIINGEI…IPRYEGDGEV (107 aa)). A Histidine triad motif motif is present at residues 94–98 (HVHFH).

This is an uncharacterized protein from Methanocaldococcus jannaschii (strain ATCC 43067 / DSM 2661 / JAL-1 / JCM 10045 / NBRC 100440) (Methanococcus jannaschii).